Reading from the N-terminus, the 287-residue chain is uncharacterized protein (287 aa).

Residues 43 to 50, 90 to 93, and 156 to 159 each bind GTP; these read GKTGVGKS, DLPG, and DKAE. The region spanning 48–138 is the G domain; that stretch reads GKSSLCNALF…LTVDEHFYHQ (91 aa).

To E.coli YfjP and YeeP.

This is an uncharacterized protein from Escherichia coli (strain K12).